The sequence spans 269 residues: Putative 12-oxophytodienoate reductase-like protein 2A (269 aa).

FMN-binding positions include 28–30 (PLT) and glutamine 103. 175–178 (HGAH) provides a ligand contact to substrate. Tyrosine 180 functions as the Proton donor in the catalytic mechanism. Residue arginine 227 participates in FMN binding.

It belongs to the NADH:flavin oxidoreductase/NADH oxidase family. Requires FMN as cofactor.

Putative oxophytodienoate reductase that may be involved in the biosynthesis or metabolism of oxylipin signaling molecules. This chain is Putative 12-oxophytodienoate reductase-like protein 2A, found in Arabidopsis thaliana (Mouse-ear cress).